We begin with the raw amino-acid sequence, 387 residues long: Cell surface GPI-anchored protein ARB_01627 (387 aa).

Residues 1–19 (MAITKYLVSALAVAGLAFA) form the signal peptide. 8 N-linked (GlcNAc...) asparagine glycosylation sites follow: Asn73, Asn175, Asn201, Asn206, Asn231, Asn236, Asn253, and Asn270. Basic and acidic residues predominate over residues 338–361 (TCRERQEKPKTGDDHSGGDEEGHK). The segment at 338-362 (TCRERQEKPKTGDDHSGGDEEGHKG) is disordered. Residue Ala364 is the site of GPI-anchor amidated alanine attachment. The propeptide at 365–387 (AAFAKAPAAALLIAFVGALQFFL) is removed in mature form.

This sequence belongs to the SPS2 family. The GPI-anchor is attached to the protein in the endoplasmic reticulum and serves to target the protein to the cell surface. There, the glucosamine-inositol phospholipid moiety is cleaved off and the GPI-modified mannoprotein is covalently attached via its lipidless GPI glycan remnant to the 1,6-beta-glucan of the outer cell wall layer.

The protein resides in the cell membrane. It localises to the secreted. It is found in the cell wall. Its function is as follows. Required for proper cell wall integrity and for the correct assembly of the mannoprotein outer layer of the cell wall. The sequence is that of Cell surface GPI-anchored protein ARB_01627 from Arthroderma benhamiae (strain ATCC MYA-4681 / CBS 112371) (Trichophyton mentagrophytes).